Consider the following 530-residue polypeptide: MACTGWTSPLPLCVCLLLTCGFAEAGKLLVVPMDGSHWFTMRSVVEKLILRGHEVVVVMPEVSWQLGRSLNCTVKTYSTSYTLEDLDREFKAFAHAQWKAQVRSIYSLLMGSYNDIFDLFFSNCRSLFKDKKLVEYLKESSFDAVFLDPFDNCGLIVAKYFSLPSVVFARGILCHYLEEGAQCPAPLSYVPRILLGFSDAMTFKERVRNHIMHLEEHLLCHRFFKNALEIASEILQTPVTEYDLYSHTSIWLLRTDFVLDYPKPVMPNMIFIGGINCHQGKPLPMEFEAYINASGEHGIVVFSLGSMVSEIPEKKAMAIADALGKIPQTVLWRYTGTRPSNLANNTILVKWLPQNDLLGHPMTRAFITHAGSHGVYESICNGVPMVMMPLFGDQMDNAKRMETKGAGVTLNVLEMTSEDLENALKAVINDKSYKENIMRLSSLHKDRPVEPLDLAVFWVEFVMRHKGAPHLRPAAHDLTWYQYHSLDVIGFLLAVVLTVAFITFKCCAYGYRKCLGKKGRVKKAHKSKTH.

Residues 1 to 25 (MACTGWTSPLPLCVCLLLTCGFAEA) form the signal peptide. Asparagine 71 carries an N-linked (GlcNAc...) asparagine glycan. Lysine 99 carries the N6-succinyllysine modification. N-linked (GlcNAc...) asparagine glycosylation is found at asparagine 292 and asparagine 344. Residues 488–504 (VIGFLLAVVLTVAFITF) traverse the membrane as a helical segment.

This sequence belongs to the UDP-glycosyltransferase family. As to quaternary structure, homodimer. Homooligomer. Interacts with UGT1A1, UGT1A3, UGT1A4, UGT1A6, UGT1A7, UGT1A8 and UGT1A10 to form heterodimers. Isoform 1 interacts with isoform 2/i2 suggesting that oligomerization is involved in negative regulation of transferase activity by isoform 2. Isoform 1 also interacts with respective i2 isoforms of UGT1A1, UGT1A3, UGT1A4, UGT1A6, UGT1A7, UGT1A8 and UGT1A10. In terms of tissue distribution, expressed in liver, kidney, colon, esophagus and small intestine.

It is found in the endoplasmic reticulum membrane. The enzyme catalyses glucuronate acceptor + UDP-alpha-D-glucuronate = acceptor beta-D-glucuronoside + UDP + H(+). The catalysed reaction is 2-hydroxy-17beta-estradiol + UDP-alpha-D-glucuronate = 2-hydroxy-17beta-estradiol 3-O-(beta-D-glucuronate) + UDP + H(+). It catalyses the reaction 4-hydroxy-17beta-estradiol + UDP-alpha-D-glucuronate = 17beta-estradiol 4-O-(beta-D-glucuronate) + UDP + H(+). It carries out the reaction 2-hydroxyestrone + UDP-alpha-D-glucuronate = 2-hydroxyestrone 3-O-(beta-D-glucuronate) + UDP + H(+). The enzyme catalyses 4-hydroxyestrone + UDP-alpha-D-glucuronate = estrone 4-O-(beta-D-glucuronate) + UDP + H(+). The catalysed reaction is prunetin + UDP-alpha-D-glucuronate = prunetin-5-O-beta-D-glucuronide + UDP. It catalyses the reaction 8-iso-prostaglandin F2alpha + UDP-alpha-D-glucuronate = 8-iso-prostaglandin F2alpha-glucuronide + UDP + H(+). It carries out the reaction 5-epi-5-F2t-IsoP + UDP-alpha-D-glucuronate = 5-epi-5-F2t-IsoP-glucuronide + UDP + H(+). The enzyme catalyses (5Z,8Z,11Z,14Z)-eicosatetraenoate + UDP-alpha-D-glucuronate = O-[(5Z),(8Z),(11Z),(14Z)-eicosatetraenoyl]-beta-D-glucuronate + UDP. The catalysed reaction is 15-hydroxy-(5Z,8Z,11Z,13E)-eicosatetraenoate + UDP-alpha-D-glucuronate = 15-O-(beta-D-glucuronosyl)-(5Z,8Z,11Z,14Z)-eicosatetraenoate + UDP + H(+). It catalyses the reaction prostaglandin B1 + UDP-alpha-D-glucuronate = 15-O-(beta-D-glucuronosyl)-prostaglandin B1 + UDP + H(+). It carries out the reaction (E)-ferulate + UDP-alpha-D-glucuronate = (E)-4-O-(beta-D-glucuronosyl)-ferulate + UDP + H(+). The enzyme catalyses (E)-ferulate + UDP-alpha-D-glucuronate = (E)-ferulic acid beta-D-glucuronate ester + UDP. The catalysed reaction is candesartan + UDP-alpha-D-glucuronate = candesartan O-beta-D-glucuronoside + UDP. It catalyses the reaction SN-38 + UDP-alpha-D-glucuronate = SN-38 O-beta-D-glucuronide + UDP + H(+). It carries out the reaction mycophenolate + UDP-alpha-D-glucuronate = mycophenolate 7-O-beta-D-glucuronide + UDP + H(+). UDP-glucuronosyltransferase (UGT) that catalyzes phase II biotransformation reactions in which lipophilic substrates are conjugated with glucuronic acid to increase the metabolite's water solubility, thereby facilitating excretion into either the urine or bile. Essential for the elimination and detoxification of drugs, xenobiotics and endogenous compounds. Catalyzes the glucuronidation of endogenous estrogen hormones such as estradiol and estrone. Involved in the glucuronidation of arachidonic acid (AA) and AA-derived eicosanoids including 15-HETE, PGB1 and F2-isoprostanes (8-iso-PGF2alpha and 5-epi-5-F2t-IsoP). Glucuronates the phytochemical ferulic acid efficently at both the phenolic or the carboxylic acid group. Also catalyzes the glucuronidation of the isoflavones genistein, daidzein, glycitein, formononetin, biochanin A and prunetin, which are phytoestrogens with anticancer and cardiovascular properties. Involved in the glucuronidation of the AGTR1 angiotensin receptor antagonist caderastan, a drug which can inhibit the effect of angiotensin II. Involved in the biotransformation of 7-ethyl-10-hydroxycamptothecin (SN-38), the pharmacologically active metabolite of the anticancer drug irinotecan. Also metabolizes mycophenolate, an immunosuppressive agent. Its function is as follows. Lacks UGT glucuronidation activity but acts as a negative regulator of isoform 1. This chain is UDP-glucuronosyltransferase 1A9, found in Homo sapiens (Human).